The following is a 471-amino-acid chain: Alpha-amylase (471 aa).

Glutamine 1 is modified (pyrrolidone carboxylic acid). The cysteines at positions 28 and 84 are disulfide-linked. Positions 98, 146, and 155 each coordinate Ca(2+). The cysteines at positions 134 and 148 are disulfide-linked. Arginine 183 provides a ligand contact to chloride. Catalysis depends on aspartate 185, which acts as the Nucleophile. Histidine 189 is a binding site for Ca(2+). Residue glutamate 222 is the Proton donor of the active site. 2 residues coordinate chloride: asparagine 285 and arginine 321. Residues 326–343 show a composition bias toward polar residues; it reads FDFTDNDQGPPQDGSGNL. The interval 326 to 346 is disordered; sequence FDFTDNDQGPPQDGSGNLISP. 2 disulfide bridges follow: cysteine 354-cysteine 360 and cysteine 425-cysteine 437.

The protein belongs to the glycosyl hydrolase 13 family. In terms of assembly, monomer. Ca(2+) serves as cofactor. It depends on chloride as a cofactor.

It catalyses the reaction Endohydrolysis of (1-&gt;4)-alpha-D-glucosidic linkages in polysaccharides containing three or more (1-&gt;4)-alpha-linked D-glucose units.. The polypeptide is Alpha-amylase (Tenebrio molitor (Yellow mealworm beetle)).